The sequence spans 126 residues: Aspartate 1-decarboxylase (126 aa).

Ser-25 acts as the Schiff-base intermediate with substrate; via pyruvic acid in catalysis. Ser-25 is modified (pyruvic acid (Ser)). Thr-57 serves as a coordination point for substrate. Tyr-58 functions as the Proton donor in the catalytic mechanism. Gly-73–Ala-75 contributes to the substrate binding site.

This sequence belongs to the PanD family. As to quaternary structure, heterooctamer of four alpha and four beta subunits. The cofactor is pyruvate. Is synthesized initially as an inactive proenzyme, which is activated by self-cleavage at a specific serine bond to produce a beta-subunit with a hydroxyl group at its C-terminus and an alpha-subunit with a pyruvoyl group at its N-terminus.

Its subcellular location is the cytoplasm. It catalyses the reaction L-aspartate + H(+) = beta-alanine + CO2. Its pathway is cofactor biosynthesis; (R)-pantothenate biosynthesis; beta-alanine from L-aspartate: step 1/1. Catalyzes the pyruvoyl-dependent decarboxylation of aspartate to produce beta-alanine. This Acinetobacter baumannii (strain ACICU) protein is Aspartate 1-decarboxylase.